We begin with the raw amino-acid sequence, 326 residues long: Vitamin B12 import system permease protein BtuC (326 aa).

A run of 9 helical transmembrane segments spans residues 19–39, 61–81, 88–108, 112–132, 146–166, 184–204, 240–260, 274–294, and 302–322; these read LSVLMLLALLLSLCAGELWIL, LAVLLVGAALAISGAVMQALF, PGLLGVSNGAGVGLIAAVLLG, LPNWALGLCAIAGALIITLIL, LLAGVALGIICSALMTWAIYF, GGVDWRQSWLMLALIPVLLWI, GWMVGVSVALAGAIGFIGLVI, VLLPGCALAGASALLLADIVA, and ELPIGVVTATLGAPVFIWLLL.

The protein belongs to the binding-protein-dependent transport system permease family. FecCD subfamily. The complex is composed of two ATP-binding proteins (BtuD), two transmembrane proteins (BtuC) and a solute-binding protein (BtuF).

It is found in the cell inner membrane. Part of the ABC transporter complex BtuCDF involved in vitamin B12 import. Involved in the translocation of the substrate across the membrane. The chain is Vitamin B12 import system permease protein BtuC from Escherichia coli O6:K15:H31 (strain 536 / UPEC).